We begin with the raw amino-acid sequence, 647 residues long: Endogenous retrovirus group K member 8 Gag polyprotein (647 aa).

Residue Gly-2 is the site of N-myristoyl glycine attachment. The tract at residues 165–264 is disordered; it reads GKGPELVGPS…APPSRQGSEL (100 aa). Residues 232–247 are compositionally biased toward pro residues; sequence GMPPAPQGREPYPQPP. CCHC-type zinc fingers lie at residues 544-561 and 580-597; these read GKCY…NCPV and DLCP…QCRS. A disordered region spans residues 598–641; that stretch reads KFDKNGQPLSGNEQRGQPQAPQQTGAFPIQPFVPQGFQDNNPHC. Over residues 604-622 the composition is skewed to polar residues; it reads QPLSGNEQRGQPQAPQQTG.

Belongs to the beta type-B retroviral Gag protein family. HERV class-II K(HML-2) gag subfamily. Post-translationally, myristoylation is essential for retroviral assembly. Alteration of the glycine residue leads to a block in the budding of particles and an accumulation of Gag inside the cell. In terms of processing, specific enzymatic cleavages may yield mature proteins.

Its subcellular location is the cell membrane. Functionally, the products of the Gag polyproteins of infectious retroviruses perform highly complex orchestrated tasks during the assembly, budding, maturation, and infection stages of the viral replication cycle. During viral assembly, the proteins form membrane associations and self-associations that ultimately result in budding of an immature virion from the infected cell. Gag precursors also function during viral assembly to selectively bind and package two plus strands of genomic RNA. Endogenous Gag proteins may have kept, lost or modified their original function during evolution. In Homo sapiens (Human), this protein is Endogenous retrovirus group K member 8 Gag polyprotein (ERVK-8).